We begin with the raw amino-acid sequence, 160 residues long: Small ribosomal subunit protein uS10m (160 aa).

This sequence belongs to the universal ribosomal protein uS10 family. Component of the mitochondrial ribosome small subunit (28S) which comprises a 12S rRNA and about 30 distinct proteins.

Its subcellular location is the mitochondrion. This chain is Small ribosomal subunit protein uS10m (Mrps10), found in Mus musculus (Mouse).